The chain runs to 384 residues: Dihydrolipoyllysine-residue acetyltransferase component of pyruvate dehydrogenase complex (384 aa).

Positions 2–77 constitute a Lipoyl-binding domain; the sequence is ANEFKFTDVG…SIGQVMAVIG (76 aa). Lys-43 carries the N6-lipoyllysine modification. The active site involves His-356.

It belongs to the 2-oxoacid dehydrogenase family. Forms a 24-polypeptide structural core with octahedral symmetry. Requires (R)-lipoate as cofactor.

It carries out the reaction N(6)-[(R)-dihydrolipoyl]-L-lysyl-[protein] + acetyl-CoA = N(6)-[(R)-S(8)-acetyldihydrolipoyl]-L-lysyl-[protein] + CoA. Its function is as follows. The pyruvate dehydrogenase complex catalyzes the overall conversion of pyruvate to acetyl-CoA and CO(2). It contains multiple copies of three enzymatic components: pyruvate dehydrogenase (E1), dihydrolipoamide acetyltransferase (E2) and lipoamide dehydrogenase (E3). This is Dihydrolipoyllysine-residue acetyltransferase component of pyruvate dehydrogenase complex (pdhC) from Mycoplasma genitalium (strain ATCC 33530 / DSM 19775 / NCTC 10195 / G37) (Mycoplasmoides genitalium).